The chain runs to 210 residues: Large ribosomal subunit protein uL4 (210 aa).

Positions 46-89 (QGTASTLTRSEVRGGGRKPYKQKGTGRARQGSIRTPLRPGGGII) are disordered. Positions 60-71 (GGRKPYKQKGTG) are enriched in basic residues.

This sequence belongs to the universal ribosomal protein uL4 family. In terms of assembly, part of the 50S ribosomal subunit.

In terms of biological role, one of the primary rRNA binding proteins, this protein initially binds near the 5'-end of the 23S rRNA. It is important during the early stages of 50S assembly. It makes multiple contacts with different domains of the 23S rRNA in the assembled 50S subunit and ribosome. Forms part of the polypeptide exit tunnel. The polypeptide is Large ribosomal subunit protein uL4 (Prochlorococcus marinus (strain MIT 9312)).